The chain runs to 62 residues: MERKRLDAEDLVARITWQALSKCLVGEMYVNAARETFFRTAKNKGLLAEPEMSLSSVGRLAK.

This is an uncharacterized protein from Sinorhizobium fredii (strain NBRC 101917 / NGR234).